Here is a 92-residue protein sequence, read N- to C-terminus: YcgL domain-containing protein Sbal_1869 (92 aa).

One can recognise a YcgL domain in the interval 1 to 85 (MLCAVYKSSR…PQVNLLAEHK (85 aa)).

The sequence is that of YcgL domain-containing protein Sbal_1869 from Shewanella baltica (strain OS155 / ATCC BAA-1091).